The chain runs to 177 residues: Large ribosomal subunit protein uL6 (177 aa).

It belongs to the universal ribosomal protein uL6 family. As to quaternary structure, part of the 50S ribosomal subunit.

This protein binds to the 23S rRNA, and is important in its secondary structure. It is located near the subunit interface in the base of the L7/L12 stalk, and near the tRNA binding site of the peptidyltransferase center. This Rickettsia felis (strain ATCC VR-1525 / URRWXCal2) (Rickettsia azadi) protein is Large ribosomal subunit protein uL6.